Reading from the N-terminus, the 375-residue chain is tRNA(Met) cytidine acetate ligase (375 aa).

ATP is bound by residues 7 to 20 (VVEY…HRYH), G101, N151, and R176.

This sequence belongs to the TmcAL family.

The protein localises to the cytoplasm. The catalysed reaction is cytidine(34) in elongator tRNA(Met) + acetate + ATP = N(4)-acetylcytidine(34) in elongator tRNA(Met) + AMP + diphosphate. Catalyzes the formation of N(4)-acetylcytidine (ac(4)C) at the wobble position of elongator tRNA(Met), using acetate and ATP as substrates. First activates an acetate ion to form acetyladenylate (Ac-AMP) and then transfers the acetyl group to tRNA to form ac(4)C34. This chain is tRNA(Met) cytidine acetate ligase, found in Limosilactobacillus fermentum (strain NBRC 3956 / LMG 18251) (Lactobacillus fermentum).